A 352-amino-acid polypeptide reads, in one-letter code: Putative histone-lysine N-methyltransferase ASHH4 (352 aa).

One can recognise an AWS domain in the interval 60 to 109; the sequence is DHGIFCSCSLDPGSSTLCGSDCNCGILLSSCSSSCKCSSECTNKPFQQRH. The SET domain maps to 111–228; the sequence is KKMKLVQTEK…KGEQLTYDYQ (118 aa). In terms of domain architecture, Post-SET spans 234–250; sequence ADQDCYCGAVCCRKKLG.

The protein belongs to the class V-like SAM-binding methyltransferase superfamily. Histone-lysine methyltransferase family. SET2 subfamily.

It localises to the nucleus. The protein localises to the chromosome. It is found in the centromere. The catalysed reaction is L-lysyl-[histone] + S-adenosyl-L-methionine = N(6)-methyl-L-lysyl-[histone] + S-adenosyl-L-homocysteine + H(+). In terms of biological role, histone methyltransferase. The chain is Putative histone-lysine N-methyltransferase ASHH4 (ASHH4) from Arabidopsis thaliana (Mouse-ear cress).